A 79-amino-acid polypeptide reads, in one-letter code: Acyl carrier protein (79 aa).

One can recognise a Carrier domain in the interval 2–77; it reads DNIEQRVKKI…QAIDYARANV (76 aa). Ser37 is subject to O-(pantetheine 4'-phosphoryl)serine.

It belongs to the acyl carrier protein (ACP) family. In terms of processing, 4'-phosphopantetheine is transferred from CoA to a specific serine of apo-ACP by AcpS. This modification is essential for activity because fatty acids are bound in thioester linkage to the sulfhydryl of the prosthetic group.

The protein localises to the cytoplasm. It functions in the pathway lipid metabolism; fatty acid biosynthesis. In terms of biological role, carrier of the growing fatty acid chain in fatty acid biosynthesis. This is Acyl carrier protein from Burkholderia cenocepacia (strain HI2424).